The sequence spans 252 residues: Iron-sulfur cluster co-chaperone protein HscB homolog (252 aa).

Residues M1–F59 constitute a mitochondrion transit peptide. The J domain occupies D93–L165.

It belongs to the HscB family. Interacts with ISU1 and HSP70-9/HSCA1.

The protein resides in the mitochondrion. The protein localises to the cytoplasm. Its subcellular location is the cytosol. Its function is as follows. Co-chaperone required for the assembly of iron-sulfur [Fe-S] clusters in both mitochondria and cytosol. Required for the activity of iron-sulfur proteins such as aconitase and succinate dehydrogenase. Involved in iron homeostasis and may take part in the control of iron translocation from roots to shoots. This Arabidopsis thaliana (Mouse-ear cress) protein is Iron-sulfur cluster co-chaperone protein HscB homolog.